Reading from the N-terminus, the 790-residue chain is Ribosome biogenesis protein ERB1 (790 aa).

Residues 1 to 93 form a disordered region; the sequence is MAKKNTVTGS…SDELQDDSNS (93 aa). Acidic residues predominate over residues 20–89; it reads SPEVSESEEI…SEDFSDELQD (70 aa). The segment at 255 to 371 is required for interaction with NOP7; the sequence is RFVPSKHEAK…LRKVPAYQEN (117 aa). The required for interaction with YTM1 stretch occupies residues 371–407; sequence NLRERFERSLDLYLAPRVRHNKLNIDPDSLIPDLPSP. WD repeat units lie at residues 423–462, 470–510, 574–616, 619–657, 660–699, 703–743, and 759–790; these read GHIG…QVYH, KDDD…YEIE, QCRK…SQSP, KSKG…LTKK, PGAR…TPYK, YHEK…DLMT, and VHSL…LWTT.

This sequence belongs to the WD repeat BOP1/ERB1 family. Component of the NOP7 complex, composed of ERB1, NOP7 and YTM1. The complex is held together by ERB1, which interacts with NOP7 via its N-terminal domain and with YTM1 via a high-affinity interaction between the seven-bladed beta-propeller domains of the 2 proteins. The NOP7 complex associates with the 66S pre-ribosome.

It is found in the nucleus. The protein localises to the nucleolus. Its subcellular location is the nucleoplasm. Its function is as follows. Component of the NOP7 complex, which is required for maturation of the 25S and 5.8S ribosomal RNAs and formation of the 60S ribosome. The chain is Ribosome biogenesis protein ERB1 from Meyerozyma guilliermondii (strain ATCC 6260 / CBS 566 / DSM 6381 / JCM 1539 / NBRC 10279 / NRRL Y-324) (Yeast).